Reading from the N-terminus, the 583-residue chain is Interactor of constitutive active ROPs 2, chloroplastic (583 aa).

Residues 1–55 (MQTPKPRPGSLEVPQKKSPASTPKTARKLKTSESDPVSSPNTKIRTPKTQSPKVV) constitute a chloroplast transit peptide. 2 disordered regions span residues 1–80 (MQTP…PELA) and 101–125 (EALK…NASE). Positions 34-52 (SDPVSSPNTKIRTPKTQSP) are enriched in polar residues. Coiled coils occupy residues 74-207 (GKTP…DAKE) and 238-516 (MKMS…AAAT). A compositionally biased stretch (basic and acidic residues) spans 102–115 (ALKKEAQDQAEETK). The segment at 518 to 583 (LSGGNNNNNS…IGVLLKKSQK (66 aa)) is disordered. Positions 519 to 529 (SGGNNNNNSNG) are enriched in low complexity. Ser540 is subject to Phosphoserine.

It belongs to the ICR family. As to quaternary structure, interacts with ARAC8, ARAC11 and KIN13A in vitro, but not with ICR1 or SEC3A.

It is found in the plastid. The protein resides in the chloroplast. Its function is as follows. Acts as a scaffold, mediating interaction of ROPs with different proteins. The polypeptide is Interactor of constitutive active ROPs 2, chloroplastic (ICR2) (Arabidopsis thaliana (Mouse-ear cress)).